Here is a 1413-residue protein sequence, read N- to C-terminus: DNA-directed RNA polymerase subunit beta' (1413 aa).

Zn(2+) is bound by residues C70, C72, C85, and C88. Mg(2+)-binding residues include D460, D462, and D464. Zn(2+) contacts are provided by C819, C893, C900, and C903.

This sequence belongs to the RNA polymerase beta' chain family. As to quaternary structure, the RNAP catalytic core consists of 2 alpha, 1 beta, 1 beta' and 1 omega subunit. When a sigma factor is associated with the core the holoenzyme is formed, which can initiate transcription. Requires Mg(2+) as cofactor. Zn(2+) serves as cofactor.

The catalysed reaction is RNA(n) + a ribonucleoside 5'-triphosphate = RNA(n+1) + diphosphate. DNA-dependent RNA polymerase catalyzes the transcription of DNA into RNA using the four ribonucleoside triphosphates as substrates. This Burkholderia vietnamiensis (strain G4 / LMG 22486) (Burkholderia cepacia (strain R1808)) protein is DNA-directed RNA polymerase subunit beta'.